A 403-amino-acid chain; its full sequence is Argininosuccinate synthase (403 aa).

Position 10–18 (10–18 (AYSGGLDTS)) interacts with ATP. Residue Tyr87 coordinates L-citrulline. Gly117 is a binding site for ATP. The L-aspartate site is built by Thr119, Asn123, and Asp124. Asn123 contributes to the L-citrulline binding site. Positions 127, 175, 184, 260, and 272 each coordinate L-citrulline.

It belongs to the argininosuccinate synthase family. Type 1 subfamily. As to quaternary structure, homotetramer.

The protein localises to the cytoplasm. The enzyme catalyses L-citrulline + L-aspartate + ATP = 2-(N(omega)-L-arginino)succinate + AMP + diphosphate + H(+). Its pathway is amino-acid biosynthesis; L-arginine biosynthesis; L-arginine from L-ornithine and carbamoyl phosphate: step 2/3. This is Argininosuccinate synthase from Bacillus pumilus (strain SAFR-032).